A 257-amino-acid polypeptide reads, in one-letter code: Aspartate/glutamate leucyltransferase (257 aa).

The protein belongs to the R-transferase family. Bpt subfamily.

The protein resides in the cytoplasm. The enzyme catalyses N-terminal L-glutamyl-[protein] + L-leucyl-tRNA(Leu) = N-terminal L-leucyl-L-glutamyl-[protein] + tRNA(Leu) + H(+). The catalysed reaction is N-terminal L-aspartyl-[protein] + L-leucyl-tRNA(Leu) = N-terminal L-leucyl-L-aspartyl-[protein] + tRNA(Leu) + H(+). Its function is as follows. Functions in the N-end rule pathway of protein degradation where it conjugates Leu from its aminoacyl-tRNA to the N-termini of proteins containing an N-terminal aspartate or glutamate. The polypeptide is Aspartate/glutamate leucyltransferase (Leptospira interrogans serogroup Icterohaemorrhagiae serovar copenhageni (strain Fiocruz L1-130)).